We begin with the raw amino-acid sequence, 94 residues long: Pyrimidine/purine nucleoside phosphorylase (94 aa).

This sequence belongs to the nucleoside phosphorylase PpnP family.

It carries out the reaction a purine D-ribonucleoside + phosphate = a purine nucleobase + alpha-D-ribose 1-phosphate. The enzyme catalyses adenosine + phosphate = alpha-D-ribose 1-phosphate + adenine. It catalyses the reaction cytidine + phosphate = cytosine + alpha-D-ribose 1-phosphate. The catalysed reaction is guanosine + phosphate = alpha-D-ribose 1-phosphate + guanine. It carries out the reaction inosine + phosphate = alpha-D-ribose 1-phosphate + hypoxanthine. The enzyme catalyses thymidine + phosphate = 2-deoxy-alpha-D-ribose 1-phosphate + thymine. It catalyses the reaction uridine + phosphate = alpha-D-ribose 1-phosphate + uracil. The catalysed reaction is xanthosine + phosphate = alpha-D-ribose 1-phosphate + xanthine. Catalyzes the phosphorolysis of diverse nucleosides, yielding D-ribose 1-phosphate and the respective free bases. Can use uridine, adenosine, guanosine, cytidine, thymidine, inosine and xanthosine as substrates. Also catalyzes the reverse reactions. The polypeptide is Pyrimidine/purine nucleoside phosphorylase (Salmonella paratyphi C (strain RKS4594)).